Here is an 85-residue protein sequence, read N- to C-terminus: Small ribosomal subunit protein uS17 (85 aa).

This sequence belongs to the universal ribosomal protein uS17 family. Part of the 30S ribosomal subunit.

Functionally, one of the primary rRNA binding proteins, it binds specifically to the 5'-end of 16S ribosomal RNA. This is Small ribosomal subunit protein uS17 from Spiroplasma citri.